Consider the following 257-residue polypeptide: MDSEDRPIGFFDSGVGGISVLKEAVKILSNENFVYFGDSKMAPYGVRTVEEVKKLTFNAVEFLLKKNIKALVVACNTATSAAIIDLRKAYSKYMPIVGIEPALKPAVECNRKGNIIIMATPMTLAESKFNNLMKRYSNSNILPLPCSGLVELIEEGKTEGEEIERYLEEKLIPLKGNGIAAVVLGCTHYPFIKKSISKVLNQDVLILDGSKGTVRQLKRQLIKYHIESNKSKIGKIKIFNSMNSQYIIKLSYKLLKE.

Substrate-binding positions include 12 to 13 (DS) and 44 to 45 (YG). C75 (proton donor/acceptor) is an active-site residue. 76–77 (NT) is a substrate binding site. The active-site Proton donor/acceptor is the C186. Substrate is bound at residue 187 to 188 (TH).

Belongs to the aspartate/glutamate racemases family.

It carries out the reaction L-glutamate = D-glutamate. Its pathway is cell wall biogenesis; peptidoglycan biosynthesis. Functionally, provides the (R)-glutamate required for cell wall biosynthesis. This chain is Glutamate racemase, found in Clostridium kluyveri (strain NBRC 12016).